A 79-amino-acid chain; its full sequence is Cyclin-dependent kinases regulatory subunit 1 (79 aa).

Ser-2 carries the N-acetylserine modification.

Belongs to the CKS family. Forms a homohexamer that can probably bind six kinase subunits.

Its function is as follows. Binds to the catalytic subunit of the cyclin dependent kinases and is essential for their biological function. The polypeptide is Cyclin-dependent kinases regulatory subunit 1 (CKS1B) (Bos taurus (Bovine)).